We begin with the raw amino-acid sequence, 340 residues long: GTPase Obg (340 aa).

The Obg domain occupies 1–159 (MGFIDEVKLC…KHVLLKLKVL (159 aa)). One can recognise an OBG-type G domain in the interval 160–329 (SDVGIIGMPN…LSEKLKKSNS (170 aa)). GTP contacts are provided by residues 166 to 173 (GMPNAGKS), 191 to 195 (FTTVR), 212 to 215 (DIPG), 279 to 282 (NKCD), and 310 to 312 (NGD). The Mg(2+) site is built by serine 173 and threonine 193.

The protein belongs to the TRAFAC class OBG-HflX-like GTPase superfamily. OBG GTPase family. In terms of assembly, monomer. Requires Mg(2+) as cofactor.

It is found in the cytoplasm. Functionally, an essential GTPase which binds GTP, GDP and possibly (p)ppGpp with moderate affinity, with high nucleotide exchange rates and a fairly low GTP hydrolysis rate. Plays a role in control of the cell cycle, stress response, ribosome biogenesis and in those bacteria that undergo differentiation, in morphogenesis control. This chain is GTPase Obg, found in Wolbachia sp. subsp. Drosophila simulans (strain wRi).